The following is a 391-amino-acid chain: MAKSKFERNKPHVNIGTIGHVDHGKTSLTAAITKYFGEFKAYDQIDAAPEEKARGITISTAHVEYETPARHYAHVDCPGHADYVKNMITGAAQMDGAILVCSAADGPMPQTREHILLARQVGVPAIVVFLNKVDQVDDAELLELVELEVRELLSSYDFPGDDIPVVKGSALAALEDSDKKIGEDAIRELMAAVDSYIPTPERPVDQPFLMPIEDVFSISGRGTVVTGRVERGIIKVGEEVEIVGIRPTSKTTVTGVEMFRKLLDQGQAGDNIGALIRGVNRDGVERGQILCKPGSVKPHKKFKAEAYILTKEEGGRHTPFFTNYRPQFYFRTTDVTGIVTLPEGTEMVMPGDNVTVDVELIVPIAMEEKLRFAIREGGRTVGAGIVASIVE.

Residues 10-201 (KPHVNIGTIG…AVDSYIPTPE (192 aa)) form the tr-type G domain. Residues 19–26 (GHVDHGKT) are G1. Position 19–26 (19–26 (GHVDHGKT)) interacts with GTP. Thr26 is a binding site for Mg(2+). A G2 region spans residues 55–59 (GITIS). The segment at 76 to 79 (DCPG) is G3. GTP is bound by residues 76-80 (DCPGH) and 131-134 (NKVD). Residues 131–134 (NKVD) are G4. The G5 stretch occupies residues 169-171 (SAL).

The protein belongs to the TRAFAC class translation factor GTPase superfamily. Classic translation factor GTPase family. EF-Tu/EF-1A subfamily. Monomer.

It localises to the cytoplasm. The catalysed reaction is GTP + H2O = GDP + phosphate + H(+). In terms of biological role, GTP hydrolase that promotes the GTP-dependent binding of aminoacyl-tRNA to the A-site of ribosomes during protein biosynthesis. The sequence is that of Elongation factor Tu 1 from Rhizobium etli (strain ATCC 51251 / DSM 11541 / JCM 21823 / NBRC 15573 / CFN 42).